The primary structure comprises 455 residues: MKKIEMYHHKKVLVLGLARSGVSAATIMHKLGAFVTVNDQKPFSENPEAQGLLEQGIKVICGSHPIELLDEGFELVIKNPGIPYNNPMIEKALKLKIPVITEVELAYQISEAPIVGITGTNGKTTTTTIIHHMLNAHKENSSLLAGNIGFPASAVAENATSDQYISMELSSFQLMGVETFKPHISVITNIYEAHLDYHTDRSEYVQAKWHIQKNQTADDFLVINWDQEELKNLTKQTKAQVIPFSTTQRLGQGSYVQNGNIMFNDEVIGARDNILLPGEHNLENVLASVAVAKTLGVTNEEIMHVLETFKGVEHRTQFVVEWQGRKFYNDSKATNILATQSALKGFKNPVVLLAGGLDRGNSFDELLPFFKNVKALIVFGETADKIGRVGKIAGIDVHYVDNVEAAVPVAYRESAPGDIILLSPACASWDQYRTFEVRGNAYMDAIGELIEEVEK.

ATP is bound at residue 119–125; it reads GTNGKTT.

Belongs to the MurCDEF family.

It is found in the cytoplasm. The catalysed reaction is UDP-N-acetyl-alpha-D-muramoyl-L-alanine + D-glutamate + ATP = UDP-N-acetyl-alpha-D-muramoyl-L-alanyl-D-glutamate + ADP + phosphate + H(+). It participates in cell wall biogenesis; peptidoglycan biosynthesis. Cell wall formation. Catalyzes the addition of glutamate to the nucleotide precursor UDP-N-acetylmuramoyl-L-alanine (UMA). The chain is UDP-N-acetylmuramoylalanine--D-glutamate ligase from Listeria monocytogenes serotype 4b (strain F2365).